Reading from the N-terminus, the 310-residue chain is Methionyl-tRNA formyltransferase (310 aa).

Residue serine 109 to proline 112 participates in (6S)-5,6,7,8-tetrahydrofolate binding.

The protein belongs to the Fmt family.

It carries out the reaction L-methionyl-tRNA(fMet) + (6R)-10-formyltetrahydrofolate = N-formyl-L-methionyl-tRNA(fMet) + (6S)-5,6,7,8-tetrahydrofolate + H(+). Functionally, attaches a formyl group to the free amino group of methionyl-tRNA(fMet). The formyl group appears to play a dual role in the initiator identity of N-formylmethionyl-tRNA by promoting its recognition by IF2 and preventing the misappropriation of this tRNA by the elongation apparatus. The sequence is that of Methionyl-tRNA formyltransferase from Pseudomonas putida (strain W619).